Here is a 723-residue protein sequence, read N- to C-terminus: 1,3-beta-galactosyl-N-acetylhexosamine phosphorylase Cphy0577 (723 aa).

D317 (proton donor) is an active-site residue.

It belongs to the glycoside hydrolase 112 family.

It carries out the reaction beta-D-galactosyl-(1-&gt;3)-N-acetyl-D-glucosamine + phosphate = alpha-D-galactose 1-phosphate + N-acetyl-D-glucosamine. Reversibly phosphorolyzes beta-D-galactopyranosyl-(1-&gt;3)-N-acetyl-D-glucosamine to form alpha-D-galactopyranose 1-phosphate and acetyl-D-glucosamine. Active towards galacto-N-biose and lacto-N-biose. Does not phosphorolyze galacto-N-tetraose or lacto-N-tetraose. In the reverse reaction has activity toward N-acetyl-D-glucosamine and N-acetyl-D-galactosamine, but not L-rhamnose, D-glucose or D-galactose. This is 1,3-beta-galactosyl-N-acetylhexosamine phosphorylase Cphy0577 from Lachnoclostridium phytofermentans (strain ATCC 700394 / DSM 18823 / ISDg) (Clostridium phytofermentans).